We begin with the raw amino-acid sequence, 361 residues long: G2/mitotic-specific cyclin-B (361 aa).

This sequence belongs to the cyclin family. Cyclin AB subfamily.

Its function is as follows. Essential for the control of the cell cycle at the G2/M (mitosis) transition. Interacts with the CDC2 protein kinase to form MPF. G2/M cyclins accumulate steadily during G2 and are abruptly destroyed at mitosis. This chain is G2/mitotic-specific cyclin-B, found in Hydra vulgaris (Hydra).